We begin with the raw amino-acid sequence, 1029 residues long: FYVE, RhoGEF and PH domain-containing protein tag-77 (1029 aa).

Basic and acidic residues-rich tracts occupy residues 1–12 (MKYDMNHRKNSD) and 20–39 (TVKE…DNRF). Disordered regions lie at residues 1–155 (MKYD…ATSE), 185–254 (VPRM…ERKT), and 279–370 (NNGV…EKDD). The segment covering 42-56 (QPPPPPSPRRAPPPP) has biased composition (pro residues). Composition is skewed to low complexity over residues 76 to 85 (PPSSSESSEN) and 122 to 133 (SSSTSDVSSQNS). 2 stretches are compositionally biased toward polar residues: residues 141–155 (SCTT…ATSE) and 200–211 (PISQVSTLSQVS). Residues 212–227 (DEFDEGDTSASDEESM) show a composition bias toward acidic residues. Over residues 316–334 (SPTSGMSSSSTDDFSRITS) the composition is skewed to low complexity. A compositionally biased stretch (polar residues) spans 335 to 347 (MTSDRSSILTSHS). The DH domain occupies 375 to 572 (KLHYAAVEFL…ENVTQAVNQK (198 aa)). In terms of domain architecture, PH spans 593-696 (NVLEPGRVLI…WTDDLTKAQY (104 aa)). Residues C810, C823, C826, C831, C834, C851, and C854 each contribute to the Zn(2+) site. The segment at 810 to 859 (CSTEFNIINRRHHCRDCGWLICKFCKGQAPLSKYDFTKQNVCSECFDRHY) adopts an FYVE-type; degenerate zinc-finger fold.

The protein resides in the cytoplasm. It is found in the cytoskeleton. In terms of biological role, activates cdc-42, a member of the Ras-like family of Rho- and Rac proteins, by exchanging bound GDP for free GTP. May play a role in regulating the actin cytoskeleton and cell shape. Required for normal lifespan. In Caenorhabditis elegans, this protein is FYVE, RhoGEF and PH domain-containing protein tag-77.